The chain runs to 450 residues: tRNA-2-methylthio-N(6)-dimethylallyladenosine synthase (450 aa).

In terms of domain architecture, MTTase N-terminal spans 8-128 (KRLYIKTYGC…LPELIARAHR (121 aa)). Positions 17, 53, 91, 166, 170, and 173 each coordinate [4Fe-4S] cluster. The Radical SAM core domain occupies 152–382 (RPTGVTAFLT…QALLEQQQLA (231 aa)). Residues 385-447 (AAQAGRVLPV…RNSLAGVLEL (63 aa)) form the TRAM domain.

Belongs to the methylthiotransferase family. MiaB subfamily. Monomer. The cofactor is [4Fe-4S] cluster.

Its subcellular location is the cytoplasm. The catalysed reaction is N(6)-dimethylallyladenosine(37) in tRNA + (sulfur carrier)-SH + AH2 + 2 S-adenosyl-L-methionine = 2-methylsulfanyl-N(6)-dimethylallyladenosine(37) in tRNA + (sulfur carrier)-H + 5'-deoxyadenosine + L-methionine + A + S-adenosyl-L-homocysteine + 2 H(+). Functionally, catalyzes the methylthiolation of N6-(dimethylallyl)adenosine (i(6)A), leading to the formation of 2-methylthio-N6-(dimethylallyl)adenosine (ms(2)i(6)A) at position 37 in tRNAs that read codons beginning with uridine. This is tRNA-2-methylthio-N(6)-dimethylallyladenosine synthase from Phenylobacterium zucineum (strain HLK1).